The sequence spans 269 residues: 3-methyl-2-oxobutanoate hydroxymethyltransferase (269 aa).

Positions 50 and 89 each coordinate Mg(2+). 3-methyl-2-oxobutanoate contacts are provided by residues 50-51, aspartate 89, and lysine 119; that span reads DS. Glutamate 121 provides a ligand contact to Mg(2+). Catalysis depends on glutamate 187, which acts as the Proton acceptor.

This sequence belongs to the PanB family. Homodecamer; pentamer of dimers. Mg(2+) is required as a cofactor.

The protein resides in the cytoplasm. It catalyses the reaction 3-methyl-2-oxobutanoate + (6R)-5,10-methylene-5,6,7,8-tetrahydrofolate + H2O = 2-dehydropantoate + (6S)-5,6,7,8-tetrahydrofolate. It participates in cofactor biosynthesis; (R)-pantothenate biosynthesis; (R)-pantoate from 3-methyl-2-oxobutanoate: step 1/2. Catalyzes the reversible reaction in which hydroxymethyl group from 5,10-methylenetetrahydrofolate is transferred onto alpha-ketoisovalerate to form ketopantoate. The chain is 3-methyl-2-oxobutanoate hydroxymethyltransferase (panB) from Corynebacterium glutamicum (strain ATCC 13032 / DSM 20300 / JCM 1318 / BCRC 11384 / CCUG 27702 / LMG 3730 / NBRC 12168 / NCIMB 10025 / NRRL B-2784 / 534).